Here is a 470-residue protein sequence, read N- to C-terminus: Zinc finger protein pat-9 (470 aa).

Residues 1-25 (MENRTPMQHHSGYEIVKSEPPSTPK) form a disordered region. C2H2-type zinc fingers lie at residues 84–106 (YPCN…QNSH), 112–134 (FECD…KRIH), and 140–162 (FVCT…KDMH). Residues 191–235 (MEQEENGGLPASSSASSVISHPLITTTSGNKKRSKAAKAKQTPSS) form a disordered region. The short motif at 221-230 (KKRSKAAKAK) is the Nuclear localization signal element.

The protein belongs to the krueppel C2H2-type zinc-finger protein family. As to expression, expressed in body wall muscle and gonad (at protein level).

The protein localises to the nucleus. The protein resides in the chromosome. Functionally, probable transcription factor; required for proper organization of muscle myofilaments and for their recruitment to the M line. The chain is Zinc finger protein pat-9 from Caenorhabditis elegans.